Consider the following 298-residue polypeptide: Cytochrome c oxidase subunit 2 (298 aa).

An N-terminal signal peptide occupies residues 1–29 (MMAIATKRRGVAAVMSLGVATMTAVPALA). Position 30 is a pyrrolidone carboxylic acid (Gln30). Residues 30 to 55 (QDVLGDLPVIGKPVNGGMNFQPASSP) lie on the Periplasmic side of the membrane. The chain crosses the membrane as a helical span at residues 56–88 (LAHDQQWLDHFVLYIITAVTIFVCLLLLICIVR). Residues 89–103 (FNRRANPVPARFTHN) are Cytoplasmic-facing. The chain crosses the membrane as a helical span at residues 104–134 (TPIEVIWTLVPVLILVAIGAFSLPILFRSQE). Residues 135 to 280 (MPNDPDLVIK…WLAGAKEEFA (146 aa)) lie on the Periplasmic side of the membrane. Residues His210, Cys245, Glu247, Cys249, His253, and Met256 each contribute to the Cu cation site. A propeptide spans 281-298 (ADASDYLPASPVKLASAE) (C-terminal propeptide).

The protein belongs to the cytochrome c oxidase subunit 2 family. The cofactor is binuclear copper center (CuA).

The protein resides in the cell inner membrane. It catalyses the reaction 4 Fe(II)-[cytochrome c] + O2 + 8 H(+)(in) = 4 Fe(III)-[cytochrome c] + 2 H2O + 4 H(+)(out). Functionally, subunits I and II form the functional core of the enzyme complex. Electrons originating in cytochrome c are transferred via heme a and Cu(A) to the binuclear center formed by heme a3 and Cu(B). The sequence is that of Cytochrome c oxidase subunit 2 (ctaC) from Paracoccus denitrificans.